The sequence spans 115 residues: Nitrogen regulatory protein P-II 2 (115 aa).

Residue Y54 is modified to O-UMP-tyrosine.

The protein belongs to the P(II) protein family.

Its function is as follows. Could be involved in the regulation of nitrogen fixation. The polypeptide is Nitrogen regulatory protein P-II 2 (Methanothermobacter thermautotrophicus (strain ATCC 29096 / DSM 1053 / JCM 10044 / NBRC 100330 / Delta H) (Methanobacterium thermoautotrophicum)).